A 417-amino-acid polypeptide reads, in one-letter code: NADH-quinone oxidoreductase subunit D (417 aa).

This sequence belongs to the complex I 49 kDa subunit family. In terms of assembly, NDH-1 is composed of 14 different subunits. Subunits NuoB, C, D, E, F, and G constitute the peripheral sector of the complex.

The protein resides in the cell inner membrane. It carries out the reaction a quinone + NADH + 5 H(+)(in) = a quinol + NAD(+) + 4 H(+)(out). NDH-1 shuttles electrons from NADH, via FMN and iron-sulfur (Fe-S) centers, to quinones in the respiratory chain. The immediate electron acceptor for the enzyme in this species is believed to be ubiquinone. Couples the redox reaction to proton translocation (for every two electrons transferred, four hydrogen ions are translocated across the cytoplasmic membrane), and thus conserves the redox energy in a proton gradient. This is NADH-quinone oxidoreductase subunit D from Legionella pneumophila subsp. pneumophila (strain Philadelphia 1 / ATCC 33152 / DSM 7513).